The chain runs to 254 residues: 4-hydroxy-tetrahydrodipicolinate reductase (254 aa).

Glycine 8–methionine 13 is a binding site for NAD(+). Position 36 (lysine 36) interacts with NADP(+). NAD(+) contacts are provided by residues glycine 89–threonine 91 and serine 115–tyrosine 118. Histidine 147 serves as the catalytic Proton donor/acceptor. A (S)-2,3,4,5-tetrahydrodipicolinate-binding site is contributed by histidine 148. Lysine 151 acts as the Proton donor in catalysis. Glycine 157–threonine 158 serves as a coordination point for (S)-2,3,4,5-tetrahydrodipicolinate.

This sequence belongs to the DapB family.

The protein resides in the cytoplasm. The catalysed reaction is (S)-2,3,4,5-tetrahydrodipicolinate + NAD(+) + H2O = (2S,4S)-4-hydroxy-2,3,4,5-tetrahydrodipicolinate + NADH + H(+). The enzyme catalyses (S)-2,3,4,5-tetrahydrodipicolinate + NADP(+) + H2O = (2S,4S)-4-hydroxy-2,3,4,5-tetrahydrodipicolinate + NADPH + H(+). It functions in the pathway amino-acid biosynthesis; L-lysine biosynthesis via DAP pathway; (S)-tetrahydrodipicolinate from L-aspartate: step 4/4. Its function is as follows. Catalyzes the conversion of 4-hydroxy-tetrahydrodipicolinate (HTPA) to tetrahydrodipicolinate. This is 4-hydroxy-tetrahydrodipicolinate reductase from Methanospirillum hungatei JF-1 (strain ATCC 27890 / DSM 864 / NBRC 100397 / JF-1).